The primary structure comprises 307 residues: Methionyl-tRNA formyltransferase (307 aa).

A (6S)-5,6,7,8-tetrahydrofolate-binding site is contributed by 108 to 111 (SLLP).

The protein belongs to the Fmt family.

The catalysed reaction is L-methionyl-tRNA(fMet) + (6R)-10-formyltetrahydrofolate = N-formyl-L-methionyl-tRNA(fMet) + (6S)-5,6,7,8-tetrahydrofolate + H(+). Its function is as follows. Attaches a formyl group to the free amino group of methionyl-tRNA(fMet). The formyl group appears to play a dual role in the initiator identity of N-formylmethionyl-tRNA by promoting its recognition by IF2 and preventing the misappropriation of this tRNA by the elongation apparatus. The chain is Methionyl-tRNA formyltransferase from Stenotrophomonas maltophilia (strain R551-3).